Reading from the N-terminus, the 763-residue chain is Xaa-Pro dipeptidyl-peptidase (763 aa).

Catalysis depends on charge relay system residues Ser349, Asp469, and His499.

Belongs to the peptidase S15 family. In terms of assembly, homodimer.

The protein localises to the cytoplasm. The catalysed reaction is Hydrolyzes Xaa-Pro-|- bonds to release unblocked, N-terminal dipeptides from substrates including Ala-Pro-|-p-nitroanilide and (sequentially) Tyr-Pro-|-Phe-Pro-|-Gly-Pro-|-Ile.. Functionally, removes N-terminal dipeptides sequentially from polypeptides having unsubstituted N-termini provided that the penultimate residue is proline. This is Xaa-Pro dipeptidyl-peptidase from Streptococcus macedonicus (Streptococcus gallolyticus macedonicus).